Reading from the N-terminus, the 601-residue chain is AT-rich interactive domain-containing protein 3A (601 aa).

The interval 1–224 (MKLQAVMETL…HMASQMPPPD (224 aa)) is disordered. A compositionally biased stretch (low complexity) spans 60–89 (MAALAAMRAAAAGLGHPSSPGGSEDGPPIS). 3 positions are modified to phosphoserine: Ser-78, Ser-82, and Ser-89. Thr-99 carries the phosphothreonine modification. Phosphoserine is present on Ser-102. Positions 114–123 (GHAEGDRHLM) are enriched in basic and acidic residues. Phosphoserine is present on Ser-127. An acidic region spans residues 128-165 (DDDDTKSKWEEQELEELGEEEEEEEEEDDFEEEEEEEE). Residues 139–166 (QELEELGEEEEEEEEEDDFEEEEEEEEG) are compositionally biased toward acidic residues. The region spanning 243–335 (DPKRKEFLDD…YLYPYECERR (93 aa)) is the ARID domain. A phosphoserine mark is found at Ser-358 and Ser-367. Residues Lys-403, Lys-404, Lys-457, and Lys-467 each participate in a glycyl lysine isopeptide (Lys-Gly) (interchain with G-Cter in SUMO2) cross-link. In terms of domain architecture, REKLES spans 449 to 546 (AALEQLREKL…GVLFAQPPPP (98 aa)). Residues 450–493 (ALEQLREKLESTEPPEKKMALVADEQQRLMQRAVQQSFLAMTAQ) are important for nuclear localization. The homodimerization stretch occupies residues 495–518 (PMNIRINSQASESRQDSAVSLTSA). The important for cytoplasmic localization stretch occupies residues 542 to 562 (QPPPPTAPSAPGKGGVSSIGT). Residues 545-601 (PPTAPSAPGKGGVSSIGTNTTTGSRTGASGSTVSGGQVGLPGVSTPTMSSTSNNSLP) form a disordered region. Composition is skewed to low complexity over residues 559 to 579 (SIGT…TVSG) and 588 to 601 (STPT…NSLP).

Homodimer. Heterodimer with ARID3B. Interacts with E2F1. Interacts with GTF2I and BTK. In terms of tissue distribution, B-cell specific in the adult. Expressed in B-cell progenitors, down-regulated in the immature B-cell stage, and is up-regulated again at later stages of B-lymphocyte differentiation.

It localises to the nucleus. Its subcellular location is the cytoplasm. Transcription factor involved in B-cell differentiation. Binds a VH promoter proximal site necessary for induced mu-heavy-chain transcription. Binds the minor groove of a restricted ATC sequence that is sufficient for nuclear matrix association. This sequence motif is present in matrix-associating regions (MARS) proximal to the promoter and flanking E mu. Activates E mu-driven transcription by binding these sites. May be involved in the control of cell cycle progression by the RB1/E2F1 pathway. The protein is AT-rich interactive domain-containing protein 3A (Arid3a) of Mus musculus (Mouse).